Reading from the N-terminus, the 1095-residue chain is Putative disease resistance protein At4g11170 (1095 aa).

The TIR domain maps to 9–173 (WRYDVFPSFR…TISKDVLEKL (165 aa)). Glu84 is an active-site residue. The NB-ARC domain maps to 168–454 (DVLEKLNATP…HENYLKQMII (287 aa)). 6 LRR repeats span residues 609 to 631 (CLVE…QPLR), 632 to 654 (NLRT…MEAT), 655 to 677 (KLNR…IKNL), 679 to 701 (HLIL…INLP), 702 to 722 (SLEV…EIST), and 723 to 744 (NIRL…VKYW).

It catalyses the reaction NAD(+) + H2O = ADP-D-ribose + nicotinamide + H(+). This is Putative disease resistance protein At4g11170 from Arabidopsis thaliana (Mouse-ear cress).